A 296-amino-acid polypeptide reads, in one-letter code: Class E basic helix-loop-helix protein 22 (296 aa).

A disordered region spans residues 26 to 70 (SAFRPPQGLDLSQPGDRSPLHCYDGPDPSDLLRHHQHHHQASSGA). The bHLH domain occupies 153–207 (TLRLNINARERRRMHDLNDALDELRAVIPYAHSPSVRKLSKIATLLLAKNYILMQ).

Its subcellular location is the nucleus. May act as a transcriptional repressor. The sequence is that of Class E basic helix-loop-helix protein 22 (bhlhe22) from Xenopus tropicalis (Western clawed frog).